Consider the following 322-residue polypeptide: Ferredoxin--NADP reductase (322 aa).

Residues Ser-14, Asp-33, Gln-41, Tyr-46, Ala-86, Phe-120, Asp-278, and Ser-319 each coordinate FAD.

Belongs to the ferredoxin--NADP reductase type 2 family. In terms of assembly, homodimer. It depends on FAD as a cofactor.

The catalysed reaction is 2 reduced [2Fe-2S]-[ferredoxin] + NADP(+) + H(+) = 2 oxidized [2Fe-2S]-[ferredoxin] + NADPH. The chain is Ferredoxin--NADP reductase from Salinispora arenicola (strain CNS-205).